Reading from the N-terminus, the 334-residue chain is Leucine carboxyl methyltransferase 1 (334 aa).

Residues Lys37, Arg73, Gly98, Asp122, 171–172, and Glu198 each bind S-adenosyl-L-methionine; that span reads DL.

It belongs to the methyltransferase superfamily. LCMT family.

The catalysed reaction is [phosphatase 2A protein]-C-terminal L-leucine + S-adenosyl-L-methionine = [phosphatase 2A protein]-C-terminal L-leucine methyl ester + S-adenosyl-L-homocysteine. In terms of biological role, methylates the carboxyl group of the C-terminal leucine residue of protein phosphatase 2A catalytic subunits to form alpha-leucine ester residues. The chain is Leucine carboxyl methyltransferase 1 (LCMT1) from Homo sapiens (Human).